Reading from the N-terminus, the 116-residue chain is Antimicrobial peptide 1b (116 aa).

The first 34 residues, 1–34, serve as a signal peptide directing secretion; that stretch reads MKPHMSATVLRAPRVAAILLAVVLAAVLATAVNG. Residues 35–77 enclose the Chitin-binding type-1 domain; sequence AQRCGDQARGAKCPNCLCCGKYGFCGSGDAYCGAGSCQSQCRG. Cystine bridges form between Cys38/Cys53, Cys47/Cys59, Cys50/Cys78, Cys52/Cys66, and Cys71/Cys75. The propeptide occupies 80–116; it reads DDVVGQALPAEPGSTRATAASSASARGLNLTATTGGP. The interval 89–116 is disordered; it reads AEPGSTRATAASSASARGLNLTATTGGP. Residues 93–105 are compositionally biased toward low complexity; it reads STRATAASSASAR.

Its function is as follows. Binds chitin. Has antifungal activity against the fungi F.solani (IC(50)=5 ug/ml), F.verticillioides (IC(50)=30 ug/ml), F.oxysporum (IC(50)=5 ug/ml), B.sorokiniana (IC(50)=5 ug/ml), B.cinerea (IC(50)=20 ug/ml) and N.crassa (IC(50)=10 ug/ml). Inhibits hyphal elongation and causes browning of hyphae in F.oxysporum. Causes destruction and discoloration of spores in B.sorokiniana. Inhibits the development of disease caused by the fungus P.infestans on potato tubers. Has antibacterial activity against the Gram-negative bacteria P.syringae and E.carotovora, and the Gram-positive bacterium C.michiganensis. Functionally, has antifungal activity against F.verticillioides (IC(50)=2.7 ug/ml). At concentrations between 45 uM and 225 uM, inhibits activity of metalloproteinase fungalysin Fv-cpm from F.verticillioides. The sequence is that of Antimicrobial peptide 1b from Triticum kiharae (Wheat).